The following is a 526-amino-acid chain: Glucose-6-phosphate isomerase (526 aa).

The Proton donor role is filled by E347. Residues H378 and K493 contribute to the active site.

Belongs to the GPI family.

The protein localises to the cytoplasm. The enzyme catalyses alpha-D-glucose 6-phosphate = beta-D-fructose 6-phosphate. It functions in the pathway carbohydrate biosynthesis; gluconeogenesis. Its pathway is carbohydrate degradation; glycolysis; D-glyceraldehyde 3-phosphate and glycerone phosphate from D-glucose: step 2/4. Its function is as follows. Catalyzes the reversible isomerization of glucose-6-phosphate to fructose-6-phosphate. The protein is Glucose-6-phosphate isomerase of Chlamydia pneumoniae (Chlamydophila pneumoniae).